A 360-amino-acid polypeptide reads, in one-letter code: GTP 3',8-cyclase (360 aa).

The segment at 1–31 (MTVTALGVPTVRGRSEGSAVASDAPGDGPLL) is disordered. One can recognise a Radical SAM core domain in the interval 33-251 (RFGRSATDLR…LQPHFRLRPD (219 aa)). R42 is a GTP binding site. The [4Fe-4S] cluster site is built by C49 and C53. Y55 is an S-adenosyl-L-methionine binding site. C56 contacts [4Fe-4S] cluster. R93 provides a ligand contact to GTP. Residue G97 coordinates S-adenosyl-L-methionine. T124 contributes to the GTP binding site. Position 148 (S148) interacts with S-adenosyl-L-methionine. K185 is a GTP binding site. Residue M219 coordinates S-adenosyl-L-methionine. 2 residues coordinate [4Fe-4S] cluster: C287 and C290. GTP is bound at residue 292–294 (RTR). [4Fe-4S] cluster is bound at residue C304.

The protein belongs to the radical SAM superfamily. MoaA family. Monomer and homodimer. It depends on [4Fe-4S] cluster as a cofactor.

It carries out the reaction GTP + AH2 + S-adenosyl-L-methionine = (8S)-3',8-cyclo-7,8-dihydroguanosine 5'-triphosphate + 5'-deoxyadenosine + L-methionine + A + H(+). It functions in the pathway cofactor biosynthesis; molybdopterin biosynthesis. Catalyzes the cyclization of GTP to (8S)-3',8-cyclo-7,8-dihydroguanosine 5'-triphosphate. This Mycobacterium ulcerans (strain Agy99) protein is GTP 3',8-cyclase.